The following is a 761-amino-acid chain: uncharacterized protein (761 aa).

The residue at position 1 (Met-1) is an N-acetylmethionine. 3 disordered regions span residues 1–82 (MEHQ…SSSS), 229–320 (SNII…SALA), and 590–640 (FNRA…PEQQ). The segment covering 13–27 (NSGSNRVTVYNGTTL) has biased composition (polar residues). Low complexity predominate over residues 28–45 (PTMPKSATPTSSSTTVTT). Polar residues-rich tracts occupy residues 244–259 (TPVS…SSPE), 266–276 (NTTSSSSTSDH), 590–604 (FNRA…STDD), and 627–640 (SKNS…PEQQ).

In terms of processing, phosphorylated by CDC28.

This is an uncharacterized protein from Saccharomyces cerevisiae (strain ATCC 204508 / S288c) (Baker's yeast).